The sequence spans 384 residues: Prokineticin receptor 2 (384 aa).

At M1 to K53 the chain is on the extracellular side. N7, N13, and N27 each carry an N-linked (GlcNAc...) asparagine glycan. A helical membrane pass occupies residues I54–F74. The Cytoplasmic segment spans residues I75–N89. A helical transmembrane segment spans residues L90–E110. At M111–V137 the chain is on the extracellular side. A disulfide bridge connects residues C128 and C208. Residues S138–V158 traverse the membrane as a helical segment. Residues H159–S171 lie on the Cytoplasmic side of the membrane. A helical membrane pass occupies residues F172–T192. The Extracellular segment spans residues K193 to Y223. Residues F224–A244 traverse the membrane as a helical segment. Topologically, residues R245–T273 are cytoplasmic. A helical membrane pass occupies residues V274 to F294. The Extracellular segment spans residues T295–T313. A helical transmembrane segment spans residues A314 to V334. The Cytoplasmic portion of the chain corresponds to T335–K384.

The protein belongs to the G-protein coupled receptor 1 family. In terms of assembly, homodimer.

The protein localises to the cell membrane. Functionally, receptor for prokineticin 2. Exclusively coupled to the G(q) subclass of heteromeric G proteins. Activation leads to mobilization of calcium, stimulation of phosphoinositide turnover and activation of p44/p42 mitogen-activated protein kinase. The protein is Prokineticin receptor 2 (PROKR2) of Bos taurus (Bovine).